Here is an 807-residue protein sequence, read N- to C-terminus: Spondin-1 (807 aa).

The signal sequence occupies residues 1–28 (MRLSPAPLKLSRTPALLALALPLAAALA). The Reelin domain occupies 29 to 194 (FSDETLDKVP…DSTFDGVTDK (166 aa)). 17 disulfides stabilise this stretch: cysteine 44-cysteine 128, cysteine 156-cysteine 182, cysteine 199-cysteine 336, cysteine 200-cysteine 340, cysteine 202-cysteine 415, cysteine 443-cysteine 480, cysteine 454-cysteine 489, cysteine 459-cysteine 494, cysteine 502-cysteine 538, cysteine 513-cysteine 517, cysteine 548-cysteine 554, cysteine 559-cysteine 595, cysteine 570-cysteine 574, cysteine 605-cysteine 610, cysteine 615-cysteine 650, cysteine 626-cysteine 630, and cysteine 660-cysteine 665. The Spondin domain occupies 195–388 (PILDCCACGT…LTSLDHPQSP (194 aa)). Asparagine 214 is a glycosylation site (N-linked (GlcNAc...) asparagine). Ca(2+)-binding residues include aspartate 325, aspartate 354, and aspartate 358. 6 TSP type-1 domains span residues 442 to 495 (TCIY…PGCS), 501 to 555 (TCTM…EECS), 558 to 611 (SCLM…PECH), 614 to 666 (PCLL…PECP), 668 to 721 (DCEL…RKCL), and 754 to 806 (GCRM…NVHP). C-linked (Man) tryptophan glycosylation occurs at tryptophan 448. C-linked (Man) tryptophan; partial glycosylation is present at tryptophan 451. C-linked (Man) tryptophan glycosylation occurs at tryptophan 507. Tryptophan 510 is a glycosylation site (C-linked (Man) tryptophan; partial). A glycan (C-linked (Man) tryptophan) is linked at tryptophan 564. Tryptophan 620 carries a C-linked (Man) tryptophan; partial glycan. C-linked (Man) tryptophan glycosylation occurs at tryptophan 623. C-linked (Man) tryptophan glycosylation is present at tryptophan 674. Asparagine 681 carries N-linked (GlcNAc...) asparagine glycosylation.

In terms of assembly, binds to the central extracellular domain of APP and inhibits beta-secretase cleavage of APP. In terms of tissue distribution, highest expression in lung, lower expression in brain, heart, kidney, liver and testis, and lowest expression in pancreas, skeletal muscle and ovary. Not expressed in spleen.

Its subcellular location is the secreted. The protein resides in the extracellular space. It is found in the extracellular matrix. Cell adhesion protein that promotes the attachment of spinal cord and sensory neuron cells and the outgrowth of neurites in vitro. May contribute to the growth and guidance of axons in both the spinal cord and the PNS. Major factor for vascular smooth muscle cell. This Homo sapiens (Human) protein is Spondin-1 (SPON1).